The chain runs to 270 residues: tRNA (guanine-N(1)-)-methyltransferase (270 aa).

S-adenosyl-L-methionine is bound by residues glycine 119 and 139 to 144; that span reads IGDYVI.

Belongs to the RNA methyltransferase TrmD family. In terms of assembly, homodimer.

It is found in the cytoplasm. It carries out the reaction guanosine(37) in tRNA + S-adenosyl-L-methionine = N(1)-methylguanosine(37) in tRNA + S-adenosyl-L-homocysteine + H(+). Functionally, specifically methylates guanosine-37 in various tRNAs. This chain is tRNA (guanine-N(1)-)-methyltransferase, found in Nitrosomonas europaea (strain ATCC 19718 / CIP 103999 / KCTC 2705 / NBRC 14298).